The primary structure comprises 602 residues: MASNSTPKYNSNSLENSLRRSPGDGMNHEQNDEIPCLPGEALITDKDVIYMCPFYGPVKGRIHVTNYKLYFKGEEMEPLISFSVPLGVIARIEKMGGASSRGENSYGLDITCKDMRNLRFALKQEVHSRKQIFEDLTKYAFPLSHGLLLFAFQNEEKFPENGWAVYDAMTEFRRQGLPNGQWRITFINKNYELCDTYPPLLVVPYSASEEDLKKVAAFRSRNRIPVLSWLHPENQSAIMRCSQPLVGMSGKRNKDDERYLDIIRDTNGQTSKLTIYDARPNVNAVANKATGGGYESEDAYPNAELVFLDIHNIHVMRESLKKLKDIVYPNVEESHWLSSLESTHWLEHIKLVLTGAIQVADKVASGKSSVVVHCSDGWDRTAQLTSLAMLMLDSYYRTIVGFEVLVQKEWISFGHKFSSRIGHGDKNHADADRSPIFLQFIDCVWQMSKQFPTAFEFNEHFLITVLDHLYSCRFGTFLYNCENIRDKEKVREKTQSLWSLISSEKSKYTNPFYTKELNRVLYPVASMRHLELWVNYYIRWNPRIRQQQPNPVEQRYMELLALRDDYVRRLEELQITNSPKMNSSTTSPSSPSQIMPQVHTPF.

Residues 1 to 32 are disordered; that stretch reads MASNSTPKYNSNSLENSLRRSPGDGMNHEQND. Over residues 17–31 the composition is skewed to basic and acidic residues; sequence SLRRSPGDGMNHEQN. Residues 28-96 form the GRAM domain; sequence HEQNDEIPCL…GVIARIEKMG (69 aa). Residues 162 to 537 enclose the Myotubularin phosphatase domain; the sequence is GWAVYDAMTE…RHLELWVNYY (376 aa). A 1,2-diacyl-sn-glycero-3-phospho-(1D-myo-inositol-3,5-bisphosphate) is bound by residues asparagine 287, asparagine 312, and isoleucine 313. Residues asparagine 287, asparagine 312, and isoleucine 313 each coordinate a 1,2-diacyl-sn-glycero-3-phospho-(1D-myo-inositol-3-phosphate). Cysteine 374 functions as the Phosphocysteine intermediate in the catalytic mechanism. The a 1,2-diacyl-sn-glycero-3-phospho-(1D-myo-inositol-3,5-bisphosphate) site is built by serine 375, aspartate 376, glycine 377, tryptophan 378, aspartate 379, arginine 380, lysine 416, and arginine 420. A 1,2-diacyl-sn-glycero-3-phospho-(1D-myo-inositol-3-phosphate) contacts are provided by serine 375, aspartate 376, glycine 377, tryptophan 378, aspartate 379, and arginine 380. Arginine 420 serves as a coordination point for a 1,2-diacyl-sn-glycero-3-phospho-(1D-myo-inositol-3-phosphate). The disordered stretch occupies residues 574 to 602; that stretch reads QITNSPKMNSSTTSPSSPSQIMPQVHTPF. Low complexity predominate over residues 583 to 592; sequence SSTTSPSSPS.

Belongs to the protein-tyrosine phosphatase family. Non-receptor class myotubularin subfamily.

It is found in the cytoplasm. The protein resides in the cell membrane. The protein localises to the cell projection. Its subcellular location is the filopodium. It localises to the ruffle. It is found in the late endosome. The protein resides in the myofibril. The protein localises to the sarcomere. The enzyme catalyses a 1,2-diacyl-sn-glycero-3-phospho-(1D-myo-inositol-3-phosphate) + H2O = a 1,2-diacyl-sn-glycero-3-phospho-(1D-myo-inositol) + phosphate. The catalysed reaction is a 1,2-diacyl-sn-glycero-3-phospho-(1D-myo-inositol-3,5-bisphosphate) + H2O = a 1,2-diacyl-sn-glycero-3-phospho-(1D-myo-inositol-5-phosphate) + phosphate. It carries out the reaction 1,2-dioctanoyl-sn-glycero-3-phospho-(1-D-myo-inositol-3-phosphate) + H2O = 1,2-dioctanoyl-sn-glycero-3-phospho-(1D-myo-inositol) + phosphate. It catalyses the reaction 1,2-dioctanoyl-sn-glycero-3-phospho-(1D-myo-inositol-3,5-bisphosphate) + H2O = 1,2-dioctanoyl-sn-glycero-3-phospho-(1D-myo-inositol-5-phosphate) + phosphate. The enzyme catalyses 1,2-dihexadecanoyl-sn-glycero-3-phospho-(1D-myo-inositol-3,5-phosphate) + H2O = 1,2-dihexadecanoyl-sn-glycero-3-phospho-(1D-myo-inositol-5-phosphate) + phosphate. Its function is as follows. Lipid phosphatase which dephosphorylates phosphatidylinositol 3-monophosphate (PI3P) and phosphatidylinositol 3,5-bisphosphate (PI(3,5)P2). The polypeptide is Myotubularin (mtm1) (Xenopus tropicalis (Western clawed frog)).